Here is a 492-residue protein sequence, read N- to C-terminus: Probable G-protein coupled receptor Mth-like 8 (492 aa).

An N-terminal signal peptide occupies residues 1–21 (MAQFCILGVLLILSGTHCSWG). At 22–218 (FHEETHYPCA…FVLGVREWTY (197 aa)) the chain is on the extracellular side. 4 disulfides stabilise this stretch: Cys-30-Cys-82, Cys-84-Cys-89, Cys-93-Cys-184, and Cys-94-Cys-107. Asn-37 and Asn-51 each carry an N-linked (GlcNAc...) asparagine glycan. Asn-129, Asn-169, and Asn-192 each carry an N-linked (GlcNAc...) asparagine glycan. The helical transmembrane segment at 219 to 239 (AICLLIAILSMFIVLMVYLMC) threads the bilayer. Topologically, residues 240–245 (SEMRNS) are cytoplasmic. A helical membrane pass occupies residues 246-266 (FYGVAIKAYAICMILGYALLA). Residues 267 to 282 (YLTLHNPANLSNAACR) lie on the Extracellular side of the membrane. N-linked (GlcNAc...) asparagine glycosylation is present at Asn-275. Residues 283–303 (ILPSLALMNLVLSFYILSFIA) form a helical membrane-spanning segment. At 304-317 (FKLYLSFYGVVFTK) the chain is on the cytoplasmic side. A helical transmembrane segment spans residues 318 to 338 (LMFWLIFTPIVLVAVGWSFFV). Residues 339 to 362 (GFSYYGSRLIFGGDTCWFDPRNWS) are Extracellular-facing. An N-linked (GlcNAc...) asparagine glycan is attached at Asn-360. A helical membrane pass occupies residues 363-383 (VMIYFYAPVFVACAISGFFYV). Topologically, residues 384-411 (LSQIYIRDQPDIETEKSFESIEKNRFKS) are cytoplasmic. The chain crosses the membrane as a helical span at residues 412-432 (FWKYFGYTAVVWVVCICSFAF). Topologically, residues 433 to 441 (NYYWENRSH) are extracellular. N-linked (GlcNAc...) asparagine glycosylation occurs at Asn-438. A helical membrane pass occupies residues 442–462 (LNYAVSFCMAFHGFAALYALI). Topologically, residues 463 to 492 (GKNQQIQNFLRRIDNGEDTCENSVPLSSFG) are cytoplasmic.

It belongs to the G-protein coupled receptor 2 family. Mth subfamily.

The protein localises to the cell membrane. The sequence is that of Probable G-protein coupled receptor Mth-like 8 (mthl8) from Drosophila melanogaster (Fruit fly).